The sequence spans 305 residues: GMP synthase [glutamine-hydrolyzing] subunit B (305 aa).

The region spanning 2–185 is the GMPS ATP-PPase domain; it reads VETEEFIAEA…LGLEEVISER (184 aa). 29–35 is a binding site for ATP; sequence SGGVDSS.

Heterodimer composed of a glutamine amidotransferase subunit (A) and a GMP-binding subunit (B).

The enzyme catalyses XMP + L-glutamine + ATP + H2O = GMP + L-glutamate + AMP + diphosphate + 2 H(+). It functions in the pathway purine metabolism; GMP biosynthesis; GMP from XMP (L-Gln route): step 1/1. Catalyzes the synthesis of GMP from XMP. In Halorubrum lacusprofundi (strain ATCC 49239 / DSM 5036 / JCM 8891 / ACAM 34), this protein is GMP synthase [glutamine-hydrolyzing] subunit B.